The following is a 587-amino-acid chain: Pentatricopeptide repeat-containing protein OGR1, mitochondrial (587 aa).

The N-terminal 30 residues, 1–30 (MSVSAAARHLESLLPRLASLRHYLQFHARL), are a transit peptide targeting the mitochondrion. 8 PPR repeats span residues 145–179 (DVRL…DVAT), 200–203 (FHRL), 217–251 (NEVT…GLDR), 252–286 (NVRV…DQTL), 287–315 (VSYN…MPTR), 319–349 (DGVT…MRVA), 351–381 (NMKH…MPFP), and 383–417 (DIVL…GSNV). The interval 386-461 (LWQTLLGAAK…VPGFSYTEID (76 aa)) is type E motif. Residues 462-492 (GVMHKFINGDKEHPRWQEIYRALEDIVSRIS) are type E(+) motif. Positions 493–587 (ELGYEPETSN…DGQCSCRDYW (95 aa)) are type DYW motif.

Its subcellular location is the mitochondrion. In terms of biological role, involved in multiple sites RNA editing events in mitochondria. Essential for C-to-U RNA editing at seven specific sites of nad2, nad4, cox2, cox3 and ccmC transcripts, all coding for proteins involved in the mitochondrial electron transport chain coupled to ATP generation. Required for normal growth and development. In Oryza sativa subsp. japonica (Rice), this protein is Pentatricopeptide repeat-containing protein OGR1, mitochondrial.